The chain runs to 717 residues: Pentatricopeptide repeat-containing protein At1g53600, mitochondrial (717 aa).

The transit peptide at 1–47 directs the protein to the mitochondrion; that stretch reads MVMRPISNKGLIYRHNICLRCNSTLAVSNHEPITQKTRNFLETTTTS. PPR repeat units lie at residues 49 to 79, 80 to 110, 111 to 142, 143 to 173, 176 to 206, 207 to 241, 242 to 272, 274 to 308, 309 to 339, 340 to 374, 375 to 401, 402 to 436, 437 to 471, 472 to 502, 503 to 537, 538 to 568, and 574 to 604; these read AIFQ…MSNR, SIVS…MPVR, VTTS…IPEK, NAVS…TPVK, DSVA…MAVK, EVVS…NVIT, WTAM…GDVK, NSNT…PLEF, DLFL…MKNK, DSVS…DMVS, WTDM…MPEK, DNIT…EVCP, NSYT…NIVN, DLSV…ISEP, NIVS…GKEP, NGVT…MKSS, and GPDH…MPCK. A type E motif region spans residues 609–684; the sequence is VWGSLLSASK…DPGSSWIILK (76 aa). Residues 685–715 form a type E(+) motif region; that stretch reads GEVHNFLAGDESQLNLEEIGFTLKMIRKEME.

This sequence belongs to the PPR family. PCMP-E subfamily.

The protein localises to the mitochondrion. This chain is Pentatricopeptide repeat-containing protein At1g53600, mitochondrial (PCMP-E63), found in Arabidopsis thaliana (Mouse-ear cress).